The chain runs to 312 residues: Ribosomal protein L11 methyltransferase (312 aa).

4 residues coordinate S-adenosyl-L-methionine: T160, G181, D203, and N246.

Belongs to the methyltransferase superfamily. PrmA family.

It is found in the cytoplasm. The catalysed reaction is L-lysyl-[protein] + 3 S-adenosyl-L-methionine = N(6),N(6),N(6)-trimethyl-L-lysyl-[protein] + 3 S-adenosyl-L-homocysteine + 3 H(+). In terms of biological role, methylates ribosomal protein L11. The chain is Ribosomal protein L11 methyltransferase from Staphylococcus aureus (strain bovine RF122 / ET3-1).